The following is a 208-amino-acid chain: MKKIFAIAALSLPLFSHFPAFAGASDELKVKLTEISSLKANFNQTVTDINDKVIQTGEGVFALSHPNQFYWHLTAPDESLIVADGTDVWIYNPFAEEVSVMDLNQAINASPIALLVHSDDETWSQYNVSQKENCFDISPKDKDSGGSEVQVCFNDNQLTKMVLKDQQGNISDFTLTNQSVIAGKDQDLFKFVVPDDVDIDDQRLKSTN.

The N-terminal stretch at 1–22 is a signal peptide; sequence MKKIFAIAALSLPLFSHFPAFA.

This sequence belongs to the LolA family. As to quaternary structure, monomer.

It is found in the periplasm. In terms of biological role, participates in the translocation of lipoproteins from the inner membrane to the outer membrane. Only forms a complex with a lipoprotein if the residue after the N-terminal Cys is not an aspartate (The Asp acts as a targeting signal to indicate that the lipoprotein should stay in the inner membrane). The protein is Outer-membrane lipoprotein carrier protein of Shewanella halifaxensis (strain HAW-EB4).